The chain runs to 332 residues: MGSSGSMVKPISGFLAALIQYPVPVVESRADIDKQIKQIIKTIHSTKAGYPGLELIVFPEYSTQGLNTKKWTTEEFLCTVPGPETDLFAEACKESEVYGVFSLMERNPDGGEPYNTAIIIDPQGEMILKYRKLNPWVPVEPWKAGDLGLPVCDGPGGSKLAVCICHDGMFPEVAREAAYKGANVLIRISGYSTQVSEQWMLTNRSNAWQNLMYTLSVNLAGYDGVFYYFGEGQVCNFDGTTLVQGHRNPWEIVTAEVYPELADQARLGWGLENNIYNLGSRGYVATPGGVKENPYTFVKDLAEGKYKVPWEDEIKVKDGTIYGYPVKKTIHS.

Residues 14-259 (FLAALIQYPV…WEIVTAEVYP (246 aa)) form the CN hydrolase domain. Glu60 functions as the Proton acceptor in the catalytic mechanism. Catalysis depends on Lys132, which acts as the Proton donor. The active-site Nucleophile is Cys165.

The protein belongs to the carbon-nitrogen hydrolase superfamily. Aliphatic amidase family.

The catalysed reaction is formamide + H2O = formate + NH4(+). In terms of biological role, is an aliphatic amidase with a restricted substrate specificity, as it only hydrolyzes formamide. The polypeptide is Formamidase (Bacillus cereus (strain Q1)).